We begin with the raw amino-acid sequence, 133 residues long: Ribosome-binding factor A (133 aa).

This sequence belongs to the RbfA family. Monomer. Binds 30S ribosomal subunits, but not 50S ribosomal subunits or 70S ribosomes.

Its subcellular location is the cytoplasm. Its function is as follows. One of several proteins that assist in the late maturation steps of the functional core of the 30S ribosomal subunit. Associates with free 30S ribosomal subunits (but not with 30S subunits that are part of 70S ribosomes or polysomes). Required for efficient processing of 16S rRNA. May interact with the 5'-terminal helix region of 16S rRNA. The protein is Ribosome-binding factor A of Klebsiella pneumoniae (strain 342).